Reading from the N-terminus, the 90-residue chain is NELL2-interacting cell ontogeny regulator 1 (90 aa).

Positions 1 to 28 (MAPALRSLLSPRTLLLLLLSLALLGARA) are cleaved as a signal peptide.

The protein belongs to the NICOL family. In terms of assembly, interacts with NELL2; triggers epididymal differentiation. Interacts with cell surface receptor TFRC; the interaction mediates uptake of NICOL1 into fibroblasts. Expression is enriched in both male and female reproductive organs, including the testis, epididymis, seminal vesicles, coagulating glands, ovary and uterus, and in various non-reproductive organs such as brain, thymus and liver. In testis, expressed in both germ cells and Sertoli cells. Also expressed at low levels in the kidney. Expressed during neocortex and cerebellum development.

The protein resides in the secreted. It localises to the cytoplasm. The protein localises to the perinuclear region. MRNA-binding protein which interacts with a range of target mRNAs including SERPINE1, ACTA2, CCN2 and COL4A1 and may promote extracellular matrix production. Binds to the 3'-UTR of SERPINE1 mRNA and stabilizes the mRNA, possibly by competing for binding with SERBP1 and preventing SERBP1-mediated mRNA degradation. Also binds to the 3'-UTR of ACTA2. Testis-derived lumicrine factor that triggers epididymal differentiation and sperm maturation. This chain is NELL2-interacting cell ontogeny regulator 1, found in Mus musculus (Mouse).